The primary structure comprises 416 residues: Gamma-glutamyl phosphate reductase (416 aa).

This sequence belongs to the gamma-glutamyl phosphate reductase family.

It is found in the cytoplasm. It catalyses the reaction L-glutamate 5-semialdehyde + phosphate + NADP(+) = L-glutamyl 5-phosphate + NADPH + H(+). It functions in the pathway amino-acid biosynthesis; L-proline biosynthesis; L-glutamate 5-semialdehyde from L-glutamate: step 2/2. Functionally, catalyzes the NADPH-dependent reduction of L-glutamate 5-phosphate into L-glutamate 5-semialdehyde and phosphate. The product spontaneously undergoes cyclization to form 1-pyrroline-5-carboxylate. The polypeptide is Gamma-glutamyl phosphate reductase (Streptococcus pyogenes serotype M49 (strain NZ131)).